The following is a 257-amino-acid chain: Imidazole glycerol phosphate synthase subunit HisF (257 aa).

Residues aspartate 12 and aspartate 131 contribute to the active site.

Belongs to the HisA/HisF family. Heterodimer of HisH and HisF.

It is found in the cytoplasm. The catalysed reaction is 5-[(5-phospho-1-deoxy-D-ribulos-1-ylimino)methylamino]-1-(5-phospho-beta-D-ribosyl)imidazole-4-carboxamide + L-glutamine = D-erythro-1-(imidazol-4-yl)glycerol 3-phosphate + 5-amino-1-(5-phospho-beta-D-ribosyl)imidazole-4-carboxamide + L-glutamate + H(+). Its pathway is amino-acid biosynthesis; L-histidine biosynthesis; L-histidine from 5-phospho-alpha-D-ribose 1-diphosphate: step 5/9. IGPS catalyzes the conversion of PRFAR and glutamine to IGP, AICAR and glutamate. The HisF subunit catalyzes the cyclization activity that produces IGP and AICAR from PRFAR using the ammonia provided by the HisH subunit. In Rhodococcus opacus (strain B4), this protein is Imidazole glycerol phosphate synthase subunit HisF.